A 408-amino-acid chain; its full sequence is S-adenosylmethionine synthase (408 aa).

An ATP-binding site is contributed by His15. Asp17 is a binding site for Mg(2+). Glu43 contacts K(+). L-methionine-binding residues include Glu56 and Gln100. Residues Gln100–Glu110 are flexible loop. ATP-binding positions include Asp171–Lys173, Lys248–Phe249, Asp257, Arg263–Lys264, Ala280, and Lys284. Asp257 provides a ligand contact to L-methionine. L-methionine is bound at residue Lys288.

This sequence belongs to the AdoMet synthase family. In terms of assembly, homotetramer; dimer of dimers. It depends on Mg(2+) as a cofactor. K(+) is required as a cofactor.

It is found in the cytoplasm. It catalyses the reaction L-methionine + ATP + H2O = S-adenosyl-L-methionine + phosphate + diphosphate. It participates in amino-acid biosynthesis; S-adenosyl-L-methionine biosynthesis; S-adenosyl-L-methionine from L-methionine: step 1/1. In terms of biological role, catalyzes the formation of S-adenosylmethionine (AdoMet) from methionine and ATP. The overall synthetic reaction is composed of two sequential steps, AdoMet formation and the subsequent tripolyphosphate hydrolysis which occurs prior to release of AdoMet from the enzyme. The chain is S-adenosylmethionine synthase from Synechococcus sp. (strain CC9902).